The chain runs to 527 residues: Probable feruloyl esterase B (527 aa).

Positions 1–19 are cleaved as a signal peptide; it reads MALLRHLLPVLTVGSAVQS. 2 disulfide bridges follow: cysteine 31/cysteine 76 and cysteine 65/cysteine 115. N-linked (GlcNAc...) asparagine glycosylation is found at asparagine 56, asparagine 86, and asparagine 139. Disulfide bonds link cysteine 188–cysteine 442, cysteine 257–cysteine 274, cysteine 283–cysteine 292, and cysteine 504–cysteine 526. Serine 189 acts as the Acyl-ester intermediate in catalysis. 5 residues coordinate Ca(2+): aspartate 258, aspartate 261, alanine 263, aspartate 265, and isoleucine 267. Asparagine 277 is a glycosylation site (N-linked (GlcNAc...) asparagine). 2 N-linked (GlcNAc...) asparagine glycosylation sites follow: asparagine 312 and asparagine 356. Catalysis depends on charge relay system residues aspartate 401 and histidine 441.

It belongs to the tannase family.

It localises to the secreted. It carries out the reaction feruloyl-polysaccharide + H2O = ferulate + polysaccharide.. Its function is as follows. Involved in degradation of plant cell walls. Hydrolyzes the feruloyl-arabinose ester bond in arabinoxylans as well as the feruloyl-galactose and feruloyl-arabinose ester bonds in pectin. The chain is Probable feruloyl esterase B (faeB) from Emericella nidulans (strain FGSC A4 / ATCC 38163 / CBS 112.46 / NRRL 194 / M139) (Aspergillus nidulans).